We begin with the raw amino-acid sequence, 616 residues long: Dihydroxy-acid dehydratase (616 aa).

Asp-81 is a binding site for Mg(2+). [2Fe-2S] cluster is bound at residue Cys-122. Mg(2+)-binding residues include Asp-123 and Lys-124. Position 124 is an N6-carboxylysine (Lys-124). Cys-195 serves as a coordination point for [2Fe-2S] cluster. A Mg(2+)-binding site is contributed by Glu-491. The active-site Proton acceptor is the Ser-517.

This sequence belongs to the IlvD/Edd family. Homodimer. The cofactor is [2Fe-2S] cluster. Mg(2+) is required as a cofactor.

The catalysed reaction is (2R)-2,3-dihydroxy-3-methylbutanoate = 3-methyl-2-oxobutanoate + H2O. It catalyses the reaction (2R,3R)-2,3-dihydroxy-3-methylpentanoate = (S)-3-methyl-2-oxopentanoate + H2O. It functions in the pathway amino-acid biosynthesis; L-isoleucine biosynthesis; L-isoleucine from 2-oxobutanoate: step 3/4. It participates in amino-acid biosynthesis; L-valine biosynthesis; L-valine from pyruvate: step 3/4. Its function is as follows. Functions in the biosynthesis of branched-chain amino acids. Catalyzes the dehydration of (2R,3R)-2,3-dihydroxy-3-methylpentanoate (2,3-dihydroxy-3-methylvalerate) into 2-oxo-3-methylpentanoate (2-oxo-3-methylvalerate) and of (2R)-2,3-dihydroxy-3-methylbutanoate (2,3-dihydroxyisovalerate) into 2-oxo-3-methylbutanoate (2-oxoisovalerate), the penultimate precursor to L-isoleucine and L-valine, respectively. The sequence is that of Dihydroxy-acid dehydratase from Edwardsiella ictaluri (strain 93-146).